Reading from the N-terminus, the 73-residue chain is Putative defensin-like protein 270 (73 aa).

Residues 1 to 23 form the signal peptide; that stretch reads MMSSKSHFVALLLIIFLIVNVQS. 4 cysteine pairs are disulfide-bonded: Cys33/Cys72, Cys39/Cys60, Cys45/Cys70, and Cys49/Cys71.

This sequence belongs to the DEFL family.

Its subcellular location is the secreted. The sequence is that of Putative defensin-like protein 270 from Arabidopsis thaliana (Mouse-ear cress).